The primary structure comprises 156 residues: Aspartate carbamoyltransferase regulatory chain (156 aa).

Residues Cys-110, Cys-115, Cys-140, and Cys-143 each contribute to the Zn(2+) site.

It belongs to the PyrI family. In terms of assembly, contains catalytic and regulatory chains. Requires Zn(2+) as cofactor.

Involved in allosteric regulation of aspartate carbamoyltransferase. The protein is Aspartate carbamoyltransferase regulatory chain of Methanocella arvoryzae (strain DSM 22066 / NBRC 105507 / MRE50).